The chain runs to 415 residues: Multifunctional CCA protein (415 aa).

Residues Gly-8 and Arg-11 each coordinate ATP. CTP contacts are provided by Gly-8 and Arg-11. Mg(2+)-binding residues include Glu-21 and Asp-23. The ATP site is built by Arg-91, Arg-137, and Arg-140. Residues Arg-91, Arg-137, and Arg-140 each contribute to the CTP site. Positions 226 to 327 constitute an HD domain; the sequence is TGIHTLMTVS…IKLFSAIDVW (102 aa).

The protein belongs to the tRNA nucleotidyltransferase/poly(A) polymerase family. Bacterial CCA-adding enzyme type 1 subfamily. Monomer. Can also form homodimers and oligomers. Mg(2+) is required as a cofactor. It depends on Ni(2+) as a cofactor.

The catalysed reaction is a tRNA precursor + 2 CTP + ATP = a tRNA with a 3' CCA end + 3 diphosphate. It catalyses the reaction a tRNA with a 3' CCA end + 2 CTP + ATP = a tRNA with a 3' CCACCA end + 3 diphosphate. Catalyzes the addition and repair of the essential 3'-terminal CCA sequence in tRNAs without using a nucleic acid template. Adds these three nucleotides in the order of C, C, and A to the tRNA nucleotide-73, using CTP and ATP as substrates and producing inorganic pyrophosphate. tRNA 3'-terminal CCA addition is required both for tRNA processing and repair. Also involved in tRNA surveillance by mediating tandem CCA addition to generate a CCACCA at the 3' terminus of unstable tRNAs. While stable tRNAs receive only 3'-terminal CCA, unstable tRNAs are marked with CCACCA and rapidly degraded. The polypeptide is Multifunctional CCA protein (Sodalis glossinidius (strain morsitans)).